A 281-amino-acid polypeptide reads, in one-letter code: Ribose-phosphate pyrophosphokinase (281 aa).

ATP is bound by residues 33 to 35 (DGE) and 90 to 91 (RQ). His-123 and Asp-161 together coordinate Mg(2+). Lys-185 is an active-site residue. Arg-187 and Asp-211 together coordinate D-ribose 5-phosphate.

It belongs to the ribose-phosphate pyrophosphokinase family. Class III (archaeal) subfamily. It depends on Mg(2+) as a cofactor.

It is found in the cytoplasm. It carries out the reaction D-ribose 5-phosphate + ATP = 5-phospho-alpha-D-ribose 1-diphosphate + AMP + H(+). It functions in the pathway metabolic intermediate biosynthesis; 5-phospho-alpha-D-ribose 1-diphosphate biosynthesis; 5-phospho-alpha-D-ribose 1-diphosphate from D-ribose 5-phosphate (route I): step 1/1. Functionally, involved in the biosynthesis of the central metabolite phospho-alpha-D-ribosyl-1-pyrophosphate (PRPP) via the transfer of pyrophosphoryl group from ATP to 1-hydroxyl of ribose-5-phosphate (Rib-5-P). This is Ribose-phosphate pyrophosphokinase from Halobacterium salinarum (strain ATCC 29341 / DSM 671 / R1).